A 59-amino-acid chain; its full sequence is Potassium channel toxin alpha-KTx 1.14 (59 aa).

Residues 1–22 (MKKISFLLLLAIVICSIGWTDG) form the signal peptide. Position 23 is a pyrrolidone carboxylic acid (glutamine 23). 3 disulfides stabilise this stretch: cysteine 29–cysteine 50, cysteine 35–cysteine 55, and cysteine 39–cysteine 57.

Belongs to the short scorpion toxin superfamily. Potassium channel inhibitor family. Alpha-KTx 01 subfamily. In terms of tissue distribution, expressed by the venom gland.

The protein localises to the secreted. In terms of biological role, potent blocker of both large-conductance calcium-activated potassium channels (KCa1.1/KCNMA1) and voltage-gated potassium channels (Kv1.3/KCNA3 and ERG1/Kv11.1/KCNH2). This chain is Potassium channel toxin alpha-KTx 1.14, found in Olivierus martensii (Manchurian scorpion).